We begin with the raw amino-acid sequence, 162 residues long: Phenazine biosynthesis protein PhzB 2 (162 aa).

Phosphothreonine is present on threonine 91.

Belongs to the PhzA/PhzB family.

Involved in the biosynthesis of the antibiotic phenazine, a nitrogen-containing heterocyclic molecule having important roles in virulence, competition and biological control. This Pseudomonas aeruginosa (strain UCBPP-PA14) protein is Phenazine biosynthesis protein PhzB 2 (phzB2).